Consider the following 505-residue polypeptide: Zinc metalloproteinase/disintegrin (505 aa).

A signal peptide spans 1 to 20; that stretch reads MIQVLLVIICLAAFPYQGTS. Residues 21-214 constitute a propeptide that is removed on maturation; the sequence is IILESGNVND…PIKKASQSNL (194 aa). Repeat copies occupy residues 153 to 179 and 180 to 206. The Peptidase M12B domain maps to 220-416; that stretch reads RYIELVIVAD…QKPQCILNKP (197 aa). Ca(2+) is bound by residues Glu223 and Asp307. Residue His356 participates in Zn(2+) binding. Glu357 is an active-site residue. 2 residues coordinate Zn(2+): His360 and His366. 2 cysteine pairs are disulfide-bonded: Cys371/Cys395 and Cys373/Cys378. Residues Cys411 and Asn414 each contribute to the Ca(2+) site. A propeptide spanning residues 417–432 is cleaved from the precursor; the sequence is LRTDTVSTPVSGNELL. The Disintegrin domain maps to 424 to 505; it reads TPVSGNELLE…AGCPRNPFHA (82 aa). 6 cysteine pairs are disulfide-bonded: Cys438–Cys453, Cys440–Cys448, Cys447–Cys470, Cys461–Cys467, Cys466–Cys491, and Cys479–Cys498. The Cell attachment site motif lies at 483-485; it reads RGD.

The protein belongs to the venom metalloproteinase (M12B) family. P-II subfamily. P-IIa sub-subfamily. In terms of assembly, monomer. It depends on Zn(2+) as a cofactor. As to expression, expressed by the venom gland.

Its subcellular location is the secreted. Impairs hemostasis in the envenomed animal. In terms of biological role, inhibits platelet aggregation induced by ADP, thrombin, platelet-activating factor and collagen. Acts by inhibiting fibrinogen interaction with platelet receptors GPIIb/GPIIIa (ITGA2B/ITGB3). In Gloydius brevicauda (Korean slamosa snake), this protein is Zinc metalloproteinase/disintegrin.